The sequence spans 325 residues: Ribosomal RNA small subunit methyltransferase H (325 aa).

S-adenosyl-L-methionine-binding positions include 33-35 (GGH), D52, L87, D101, and Q108. Positions 285–325 (AEPAGEVEKADNPRAASVRLRAAERTAPNPDRTQPTIGGAS) are disordered. Residues 315–325 (DRTQPTIGGAS) are compositionally biased toward polar residues.

It belongs to the methyltransferase superfamily. RsmH family.

It localises to the cytoplasm. The catalysed reaction is cytidine(1402) in 16S rRNA + S-adenosyl-L-methionine = N(4)-methylcytidine(1402) in 16S rRNA + S-adenosyl-L-homocysteine + H(+). Specifically methylates the N4 position of cytidine in position 1402 (C1402) of 16S rRNA. The sequence is that of Ribosomal RNA small subunit methyltransferase H from Frankia alni (strain DSM 45986 / CECT 9034 / ACN14a).